A 218-amino-acid polypeptide reads, in one-letter code: Octanoyltransferase (218 aa).

Positions 34 to 209 (ETSRDELWIV…TFSQELGYQH (176 aa)) constitute a BPL/LPL catalytic domain. Residues 73–80 (RGGQVTYH), 140–142 (SLG), and 153–155 (GLA) contribute to the substrate site. C171 functions as the Acyl-thioester intermediate in the catalytic mechanism.

Belongs to the LipB family.

The protein localises to the cytoplasm. The enzyme catalyses octanoyl-[ACP] + L-lysyl-[protein] = N(6)-octanoyl-L-lysyl-[protein] + holo-[ACP] + H(+). The protein operates within protein modification; protein lipoylation via endogenous pathway; protein N(6)-(lipoyl)lysine from octanoyl-[acyl-carrier-protein]: step 1/2. Functionally, catalyzes the transfer of endogenously produced octanoic acid from octanoyl-acyl-carrier-protein onto the lipoyl domains of lipoate-dependent enzymes. Lipoyl-ACP can also act as a substrate although octanoyl-ACP is likely to be the physiological substrate. This is Octanoyltransferase from Shewanella loihica (strain ATCC BAA-1088 / PV-4).